The chain runs to 150 residues: Glycine cleavage system H-like protein gcvH2 (150 aa).

Residues 44–126 (VATVGLSSFG…PANNWMVKFK (83 aa)) form the Lipoyl-binding domain.

This sequence belongs to the GcvH family.

This is Glycine cleavage system H-like protein gcvH2 (gcvH2) from Dictyostelium discoideum (Social amoeba).